We begin with the raw amino-acid sequence, 466 residues long: cAMP-dependent protein kinase regulatory subunit (466 aa).

The segment at glutamine 25–phenylalanine 231 is dimerization and phosphorylation. Over residues alanine 71–alanine 80 the composition is skewed to low complexity. Disordered stretches follow at residues alanine 71 to serine 90, serine 109 to phenylalanine 139, asparagine 154 to proline 179, and serine 193 to glutamate 218. A compositionally biased stretch (polar residues) spans asparagine 81–serine 90. A compositionally biased stretch (basic and acidic residues) spans serine 109 to serine 118. Residue serine 193 is modified to Phosphoserine. The span at glutamine 200 to glutamate 218 shows a compositional bias: basic and acidic residues. Residues leucine 232–asparagine 347, glutamate 297, arginine 306, isoleucine 350–histidine 466, glutamate 416, and arginine 425 each bind 3',5'-cyclic AMP.

Belongs to the cAMP-dependent kinase regulatory chain family. In terms of assembly, tetramer, composed of 2 regulatory (R) and 2 catalytic (C) subunits. In the presence of cAMP it dissociates into 2 active monomeric C subunits and an R dimer.

The chain is cAMP-dependent protein kinase regulatory subunit (PKAR) from Kluyveromyces lactis (strain ATCC 8585 / CBS 2359 / DSM 70799 / NBRC 1267 / NRRL Y-1140 / WM37) (Yeast).